We begin with the raw amino-acid sequence, 67 residues long: Large ribosomal subunit protein bL35 (67 aa).

Basic residues predominate over residues 1–16 (MPKMKTKSSAKKRFRV). A disordered region spans residues 1 to 24 (MPKMKTKSSAKKRFRVRPGGTVKR).

Belongs to the bacterial ribosomal protein bL35 family.

This chain is Large ribosomal subunit protein bL35, found in Verminephrobacter eiseniae (strain EF01-2).